The following is a 424-amino-acid chain: MSYLFTSESVSEGHPDKVADQISDAILDYFIAYDTNSKVACETLVTSGQIILAGEVKSKVYLDIPEIVREVIEGIGYTKSEYHFESKSSGIISLIHEQSNDISRGIERESPLDQGAGDQGMMFGYATNETANYIPLSLDLSHQLMKELTNIRKYEPELMPYLRPDAKSQVTIRYHDNDIPKSIDTIVISTQHDEFDTAEVMQSKIMKDVRNILIPRIKANYSENIQALFDDKIKYYINPTGKFVIGGPHGDAGLTGRKIIVDTYGGRGAHGGGAFSGKDPSKVDRSAAYAARHIAKNLVAAGVSEEVLVQVSYAIGVTKPINIFVNTYGKSKVKLTDSQIAERVLEIFDLRPKAIENRLKLRNPIYKETAAYGHMGRLPKIVKKVFTPRYANVAKSKDLKKELKVELFTWEKLDYVKKIRKIFQ.

His-14 contacts ATP. Residue Asp-16 participates in Mg(2+) binding. A K(+)-binding site is contributed by Glu-42. L-methionine-binding residues include Glu-55 and Gln-98. Positions 98–108 (QSNDISRGIER) are flexible loop. Residues 165-167 (DAK), 242-243 (KF), Asp-251, 257-258 (RK), Ala-274, and Lys-278 each bind ATP. Position 251 (Asp-251) interacts with L-methionine. Lys-282 contacts L-methionine.

It belongs to the AdoMet synthase family. Homotetramer; dimer of dimers. Mg(2+) is required as a cofactor. It depends on K(+) as a cofactor.

Its subcellular location is the cytoplasm. The catalysed reaction is L-methionine + ATP + H2O = S-adenosyl-L-methionine + phosphate + diphosphate. Its pathway is amino-acid biosynthesis; S-adenosyl-L-methionine biosynthesis; S-adenosyl-L-methionine from L-methionine: step 1/1. Its function is as follows. Catalyzes the formation of S-adenosylmethionine (AdoMet) from methionine and ATP. The overall synthetic reaction is composed of two sequential steps, AdoMet formation and the subsequent tripolyphosphate hydrolysis which occurs prior to release of AdoMet from the enzyme. This chain is S-adenosylmethionine synthase, found in Azobacteroides pseudotrichonymphae genomovar. CFP2.